Reading from the N-terminus, the 400-residue chain is Elongation factor Tu (400 aa).

The tr-type G domain maps to 10–208 (KPHMNVGTIG…AMDSYFPDPV (199 aa)). Residues 19-26 (GHIDHGKT) form a G1 region. 19–26 (GHIDHGKT) is a binding site for GTP. Residue T26 coordinates Mg(2+). The G2 stretch occupies residues 60 to 64 (GITIN). A G3 region spans residues 81–84 (DCPG). GTP contacts are provided by residues 81–85 (DCPGH) and 136–139 (NKVD). A G4 region spans residues 136–139 (NKVD). Residues 174 to 176 (SAL) are G5.

The protein belongs to the TRAFAC class translation factor GTPase superfamily. Classic translation factor GTPase family. EF-Tu/EF-1A subfamily. In terms of assembly, monomer.

It is found in the cytoplasm. The enzyme catalyses GTP + H2O = GDP + phosphate + H(+). In terms of biological role, GTP hydrolase that promotes the GTP-dependent binding of aminoacyl-tRNA to the A-site of ribosomes during protein biosynthesis. This Fervidobacterium nodosum (strain ATCC 35602 / DSM 5306 / Rt17-B1) protein is Elongation factor Tu.